A 374-amino-acid polypeptide reads, in one-letter code: MNFNKLKFGATIGIIGGGQLGKMMAQSAQKMGYKVVVLDPSEDCPCRYVAHEFIQAKYDDEKALNQLGQKCDVITYEFENISAQQLKLLCEKYNIPQGYQAIQLLQDRLTEKETLKSAGTKVVPFISVKESTDIDKAIETLGYPFIVKTRFGGYDGKGQVLINNEKDLQEGFKLIETSECVAEKYLNIKKEVSLTVTRGNNNQITFFPLQENEHRNQILFKTIVPARIDKTAEAKEQVNKIIQSIHFIGTFTVEFFIDSNNQLYVNEIAPRPHNSGHYSIEACDYSQFDTHILAVTGQSLPNSIELLKPAVMMNLLGKDLDLLENEFNEHPEWHLHIYGKSGRKDSRKMGHMTVLTNDVNQTEQDMYAKFEGSN.

ATP contacts are provided by residues arginine 108, lysine 148, 153–159 (GYDGKGQ), 183–186 (EKYL), glutamate 191, histidine 214, and 266–267 (NE). The region spanning 112 to 296 (KETLKSAGTK…QFDTHILAVT (185 aa)) is the ATP-grasp domain.

The protein belongs to the PurK/PurT family. Homodimer.

The enzyme catalyses 5-amino-1-(5-phospho-beta-D-ribosyl)imidazole + hydrogencarbonate + ATP = 5-carboxyamino-1-(5-phospho-D-ribosyl)imidazole + ADP + phosphate + 2 H(+). The protein operates within purine metabolism; IMP biosynthesis via de novo pathway; 5-amino-1-(5-phospho-D-ribosyl)imidazole-4-carboxylate from 5-amino-1-(5-phospho-D-ribosyl)imidazole (N5-CAIR route): step 1/2. Catalyzes the ATP-dependent conversion of 5-aminoimidazole ribonucleotide (AIR) and HCO(3)(-) to N5-carboxyaminoimidazole ribonucleotide (N5-CAIR). The sequence is that of N5-carboxyaminoimidazole ribonucleotide synthase from Staphylococcus aureus (strain Mu50 / ATCC 700699).